The primary structure comprises 629 residues: Coiled-coil domain-containing protein 93 (629 aa).

The segment at 1–23 is disordered; that stretch reads MGLPKGPEGQGLPEVETREDEEQ. Residues 1–428 form a sufficient for interaction with CCDC22 region; the sequence is MGLPKGPEGQ…ETLKAERAPG (428 aa). 2 coiled-coil regions span residues 231–430 and 558–599; these read LSAA…PGEK and LRQM…LLEK. Ser298, Ser301, and Ser305 each carry phosphoserine. Positions 446-629 are sufficient for interaction with WASHC2C; it reads THNEDLDRRY…LLSKIKAKAS (184 aa).

This sequence belongs to the CCDC93 family. Component of the commander complex consisting of the CCC subcomplex and the retriever subcomplex. Component of the CCC (COMMD/CCDC22/CCDC93) subcomplex consisting of COMMD1, COMMD2, COMMD3, COMMD4, COMMD5, COMMD6, COMMD7, COMMD8, COMMD9, COMMD10, CCDC22 and CCDC93. Forms a coiled-coil heterodimer with CCDC22; this heterodimer interacts with the guanine nucleotide exchange factor DENND10; the interaction is direct. Interacts with WASHC1. Interacts directly with WASHC2C. Interacts with SNX17 and SNX31.

It localises to the early endosome. Its function is as follows. Component of the commander complex that is essential for endosomal recycling of transmembrane cargos; the commander complex is composed of composed of the CCC subcomplex and the retriever subcomplex. Component of the CCC complex, which is involved in the regulation of endosomal recycling of surface proteins, including integrins, signaling receptor and channels. The CCC complex associates with SNX17, retriever and WASH complexes to prevent lysosomal degradation and promote cell surface recycling of numerous cargos such as integrins ITGA5:ITGB1. Involved in copper-dependent ATP7A trafficking between the trans-Golgi network and vesicles in the cell periphery; the function is proposed to depend on its association within the CCC complex and cooperation with the WASH complex on early endosomes and is dependent on its interaction with WASHC2C. The sequence is that of Coiled-coil domain-containing protein 93 (Ccdc93) from Mus musculus (Mouse).